We begin with the raw amino-acid sequence, 428 residues long: MKTSLFKSLYFQVLTAIAIGILLGHFYPEIGEQMKPLGDGFVKLIKMIIAPVIFCTVVTGIAGMESMKAVGRTGAVALLYFEIVSTIALIIGLIIVNVVQPGAGMNVDPATLDAKAVEVYADQAKDQGIVAFIMDVIPASVIGAFASGNILQVLLFAVLFGFALHRLGSKGQLIFNVIESFSQVIFGIINMIMRLAPIGAFGAMAFTIGKYGVGTLVQLGQLIICFYITCILFVVLVLGSIAKATGFSIFKFIRYIREELLIVLGTSSSESALPRMLDKMEKLGCRKSVVGLVIPTGYSFNLDGTSIYLTMAAVFIAQATNSQMDIVHQITLLIVLLLSSKGAAGVTGSGFIVLAATLSAVGHLPVAGLALILGIDRFMSEARALTNLVGNGVATIVVAKWVKELDHKKLDDVLNNRAPDGKTHELSS.

The next 8 helical transmembrane spans lie at 8–28 (SLYF…HFYP), 44–64 (LIKM…IAGM), 76–96 (VALL…LIIV), 142–162 (IGAF…LFGF), 184–204 (VIFG…FGAM), 222–242 (LIIC…GSIA), 326–346 (IVHQ…AAGV), and 352–372 (IVLA…LALI).

Belongs to the dicarboxylate/amino acid:cation symporter (DAACS) (TC 2.A.23) family.

The protein localises to the cell inner membrane. Its function is as follows. Responsible for the transport of dicarboxylates such as succinate, fumarate, and malate from the periplasm across the membrane. This Shigella dysenteriae serotype 1 (strain Sd197) protein is C4-dicarboxylate transport protein.